We begin with the raw amino-acid sequence, 265 residues long: Neutrophil elastase (265 aa).

An N-terminal signal peptide occupies residues 1 to 26; the sequence is MALGRLSSRTLAAMLLALFLGGPALA. One can recognise a Peptidase S1 domain in the interval 29 to 247; that stretch reads IVGGRPARPH…FADWINSIIR (219 aa). A disulfide bond links Cys54 and Cys70. Active-site charge relay system residues include His69 and Asp116. Residues Asn123 and Asn172 are each glycosylated (N-linked (GlcNAc...) asparagine). 3 disulfide bridges follow: Cys150–Cys208, Cys180–Cys187, and Cys198–Cys223. The active-site Charge relay system is Ser202.

The protein belongs to the peptidase S1 family. Elastase subfamily. Interacts with NOTCH2NL.

It carries out the reaction Hydrolysis of proteins, including elastin. Preferential cleavage: Val-|-Xaa &gt; Ala-|-Xaa.. Functionally, serine protease that modifies the functions of natural killer cells, monocytes and granulocytes. Inhibits C5a-dependent neutrophil enzyme release and chemotaxis. Promotes blood coagulation. Through the activation of the platelet fibrinogen receptor integrin alpha-IIb/beta-3, potentiates platelet aggregation induced by a threshold concentration of cathepsin G (CTSG). Cleaves and thus inactivates tissue factor pathway inhibitor (TFPI). Capable of killing E.coli; probably digests outer membrane protein A (ompA) in E.coli. The sequence is that of Neutrophil elastase (Elane) from Mus musculus (Mouse).